Here is a 577-residue protein sequence, read N- to C-terminus: General transcription factor IIF subunit 1 (577 aa).

Positions Met1–Ala36 are disordered. Ser183, Ser246, Ser250, and Ser252 each carry phosphoserine. Positions Lys236–Gly508 are disordered. Over residues Met240–Glu256 the composition is skewed to acidic residues. A compositionally biased stretch (basic and acidic residues) spans Asp257 to Ala271. Over residues Lys272–Lys285 the composition is skewed to basic residues. Positions Asp289–Arg304 are enriched in acidic residues. Positions Pro319–Thr341 are enriched in basic and acidic residues. Thr341 carries the phosphothreonine modification. Phosphoserine is present on residues Ser342, Ser352, and Ser355. The span at Gly362 to Lys376 shows a compositional bias: basic and acidic residues. Positions Ser392–Ser406 are enriched in low complexity. Positions Val423 to Ser437 are enriched in basic and acidic residues. A compositionally biased stretch (low complexity) spans Ala438–Ala456. A phosphoserine mark is found at Ser453 and Ser455. Thr457 is subject to Phosphothreonine. Polar residues-rich tracts occupy residues Ser471–Pro489 and Glu496–Ser506. Phosphoserine is present on residues Ser482 and Ser484. At Thr488 the chain carries Phosphothreonine.

This sequence belongs to the TFIIF alpha subunit family. In terms of assembly, heterodimer of an alpha and a beta subunit. In terms of processing, phosphorylated on Ser and other residues by TAF1 and casein kinase II-like kinases.

Its subcellular location is the nucleus. In terms of biological role, TFIIF is a general transcription initiation factor that binds to RNA polymerase II and helps to recruit it to the initiation complex in collaboration with TFIIB. It promotes transcription elongation. In Drosophila melanogaster (Fruit fly), this protein is General transcription factor IIF subunit 1.